The primary structure comprises 296 residues: Protoheme IX farnesyltransferase (296 aa).

9 consecutive transmembrane segments (helical) span residues 8–28, 35–55, 84–104, 107–127, 132–152, 162–182, 208–228, 229–249, and 263–283; these read VTKP…FLLA, YPLF…GCVF, VSLV…YIGA, LAMW…SLYM, VYGT…GYCA, LILL…IAIF, ITVY…GGYA, GYKY…MALR, and LFVF…IDFS.

It belongs to the UbiA prenyltransferase family. Protoheme IX farnesyltransferase subfamily.

The protein resides in the cell inner membrane. The catalysed reaction is heme b + (2E,6E)-farnesyl diphosphate + H2O = Fe(II)-heme o + diphosphate. It functions in the pathway porphyrin-containing compound metabolism; heme O biosynthesis; heme O from protoheme: step 1/1. Converts heme B (protoheme IX) to heme O by substitution of the vinyl group on carbon 2 of heme B porphyrin ring with a hydroxyethyl farnesyl side group. The chain is Protoheme IX farnesyltransferase from Serratia proteamaculans (strain 568).